A 422-amino-acid chain; its full sequence is Trichothecene biosynthesis transcription regulator TRI10 (422 aa).

Belongs to the TRI10 transcription regulator family.

It localises to the nucleus. Functionally, transcriptional activator of all of the trichothecene biosynthesis genes. Acts upstream of the cluster-encoded transcription factor TRI6 and is necessary for full expression of both the other trichothecene genes and the genes for the primary metabolic pathway that precedes the trichothecene biosynthetic pathway. The protein is Trichothecene biosynthesis transcription regulator TRI10 of Trichoderma arundinaceum.